We begin with the raw amino-acid sequence, 450 residues long: Endosomal transmembrane epsin interactor 1 (450 aa).

The signal sequence occupies residues 1-29 (MILLVNLFVLLSVVCVLLNLAGFILGCQG). Residues 30 to 85 (AQFVSSVPRCDLVDLGEGKICFCCEEFQPAKCTDKENALKLFPVQPCSAVHLLLKK) lie on the Lumenal side of the membrane. The chain crosses the membrane as a helical span at residues 86-106 (VLFALCALNALTTTVCLVAAA). Topologically, residues 107-450 (LRYLQIFATR…LIGVIRETVL (344 aa)) are cytoplasmic. Residues 107–450 (LRYLQIFATR…LIGVIRETVL (344 aa)) form a mediates interaction with EPN1 region. 2 consecutive short sequence motifs (PPxY; mediates interaction with ITCH) follow at residues 148 to 151 (PPSY) and 194 to 197 (PPPY). The segment at 235 to 284 (DGDIPNIPAEENASTSTPSSTLVRPIRSRRALPPLRTRSKSDPVLHPSEE) is disordered. Residues 246–256 (NASTSTPSSTL) show a composition bias toward polar residues. The span at 273–284 (SKSDPVLHPSEE) shows a compositional bias: basic and acidic residues. A Glycyl lysine isopeptide (Lys-Gly) (interchain with G-Cter in ubiquitin) cross-link involves residue Lys274. Phosphoserine is present on Ser275. Residues Lys329 and Lys365 each participate in a glycyl lysine isopeptide (Lys-Gly) (interchain with G-Cter in ubiquitin) cross-link.

Belongs to the ENTREP family. Interacts with ITCH; enhances the ubiquitination of CXCR4 by ITCH and the subsequent endocytosis and desensitization of the receptor. Interacts with EPN1. Post-translationally, monoubiquitinated at Lys-274, Lys-329 and Lys-365 by ITCH. As to expression, prominently expressed in muscle.

It is found in the early endosome membrane. The protein resides in the late endosome membrane. The protein localises to the recycling endosome membrane. It localises to the cell membrane. Functions as an activator of the E3 ubiquitin protein ligase ITCH in the ubiquitination of the CXCL12-activated CXCR4 receptor. Thereby, triggers CXCR4 endocytosis and desensitization, negatively regulating the CXCL12/CXCR4 signaling pathway. This is Endosomal transmembrane epsin interactor 1 from Homo sapiens (Human).